Here is a 238-residue protein sequence, read N- to C-terminus: Ureidoacrylate amidohydrolase RutB (238 aa).

Catalysis depends on D35, which acts as the Proton acceptor. Residue K144 is part of the active site. C177 (nucleophile) is an active-site residue.

The protein belongs to the isochorismatase family. RutB subfamily.

The enzyme catalyses (Z)-3-ureidoacrylate + H2O + H(+) = (Z)-3-aminoacrylate + NH4(+) + CO2. It catalyses the reaction (Z)-3-ureidoacrylate + H2O = (Z)-3-aminoacrylate + carbamate + H(+). The catalysed reaction is (Z)-2-methylureidoacrylate + H2O + H(+) = (Z)-2-methylaminoacrylate + NH4(+) + CO2. Functionally, hydrolyzes ureidoacrylate to form aminoacrylate and carbamate. The carbamate hydrolyzes spontaneously, thereby releasing one of the nitrogen atoms of the pyrimidine ring as ammonia and one of its carbon atoms as CO2. The sequence is that of Ureidoacrylate amidohydrolase RutB from Caulobacter vibrioides (strain NA1000 / CB15N) (Caulobacter crescentus).